Reading from the N-terminus, the 279-residue chain is Secreted RxLR effector protein 90 (279 aa).

The N-terminal stretch at 1–19 (MKSAAAFATFLTLSVFVAT) is a signal peptide. A RxLR-dEER motif is present at residues 29 to 46 (RGLRSLADNQSTESSEGR). Disordered regions lie at residues 29-53 (RGLR…YNHH) and 135-176 (ATPA…NLAG). The N-linked (GlcNAc...) asparagine glycan is linked to Asn37. Positions 135-146 (ATPAPTTSVPSS) are enriched in low complexity. Residues 147–163 (LVNTDTSDNQLPTTPVA) are compositionally biased toward polar residues. Gly residues predominate over residues 166-176 (QGGGIGSNLAG). The N-linked (GlcNAc...) asparagine glycan is linked to Asn217.

Belongs to the RxLR effector family.

The protein localises to the secreted. Its subcellular location is the host cell membrane. Functionally, secreted effector that completely suppresses the host cell death induced by cell death-inducing proteins. This Plasmopara viticola (Downy mildew of grapevine) protein is Secreted RxLR effector protein 90.